The following is a 258-amino-acid chain: Synaptosomal-associated protein 29 (258 aa).

The disordered stretch occupies residues 1 to 41 (MSAYPKSYNPFDDDGEDEGARPAPWRDARDLPDGPDAPADR). A compositionally biased stretch (basic and acidic residues) spans 18–32 (EGARPAPWRDARDLP). The stretch at 76 to 107 (ASSEELARQRGVLERTEKMVDKMDQDLKISQK) forms a coiled coil. Phosphoserine occurs at positions 77, 78, and 114. The segment at 127 to 190 (PVETPPEQNG…GSAVSTDAYP (64 aa)) is disordered. Phosphothreonine occurs at positions 130 and 137. The span at 132 to 144 (PEQNGTLASQPNS) shows a compositional bias: polar residues. 5 positions are modified to phosphoserine: serine 163, serine 182, serine 185, serine 204, and serine 210. In terms of domain architecture, t-SNARE coiled-coil homology spans 196–258 (QAYHQKIDSN…KSTERKVRQL (63 aa)).

This sequence belongs to the SNAP-25 family. In terms of assembly, forms a SNARE complex, composed of VAMP8, SNAP29 and STX17, involved in fusion of autophagosome with lysosome. Interacts with multiple syntaxins including STX6. Interacts with EIPR1. Interacts with STX17; this interaction is increased in the absence of TMEM39A.

The protein localises to the cytoplasm. It is found in the golgi apparatus membrane. Its subcellular location is the cytoplasmic vesicle. It localises to the autophagosome membrane. The protein resides in the cell projection. The protein localises to the cilium membrane. Its function is as follows. SNAREs, soluble N-ethylmaleimide-sensitive factor-attachment protein receptors, are essential proteins for fusion of cellular membranes. SNAREs localized on opposing membranes assemble to form a trans-SNARE complex, an extended, parallel four alpha-helical bundle that drives membrane fusion. SNAP29 is a SNARE involved in autophagy through the direct control of autophagosome membrane fusion with the lysososome membrane. Also plays a role in ciliogenesis by regulating membrane fusions. The chain is Synaptosomal-associated protein 29 from Pongo abelii (Sumatran orangutan).